The chain runs to 766 residues: Protein zer-1 homolog (766 aa).

An N-acetylalanine modification is found at Ala2. 3 LRR repeats span residues 226–245 (SLVL…IVQL), 246–268 (HKLR…KLTR), and 278–302 (LGNL…KMEE). ARM repeat units follow at residues 427-467 (RSEQ…NFGI), 511-556 (DNDH…NITD), 558-600 (TPDN…NVAE), 602-643 (KELR…HIMF), and 714-756 (PDKY…HCSN).

This sequence belongs to the zyg-11 family. In terms of assembly, interacts with the ELOC-ELOB/Elongin BC complex. Part of an E3 ubiquitin ligase complex including ZER1, CUL2 and Elongin BC.

Serves as substrate adapter subunit in the E3 ubiquitin ligase complex ZYG11B-CUL2-Elongin BC. Acts redudantly with ZYG11B to target substrates bearing N-terminal glycine degrons for proteasomal degradation. Involved in the clearance of proteolytic fragments generated by caspase cleavage during apoptosis since N-terminal glycine degrons are strongly enriched at caspase cleavage sites. Also important in the quality control of protein N-myristoylation in which N-terminal glycine degrons are conditionally exposed after a failure of N-myristoylation. The protein is Protein zer-1 homolog (ZER1) of Pongo abelii (Sumatran orangutan).